A 352-amino-acid chain; its full sequence is Invasion chromosome antigen T (352 aa).

This sequence belongs to the IcaT/YfdF family.

Its subcellular location is the secreted. Its function is as follows. May contribute to pathogenesis, although some of its characteristics suggest it is a fossil gene. In Shigella flexneri serotype 5a (strain M90T), this protein is Invasion chromosome antigen T.